A 259-amino-acid polypeptide reads, in one-letter code: tRNA (guanine-N(7)-)-methyltransferase (259 aa).

S-adenosyl-L-methionine-binding positions include G80, 103–104 (EL), 136–137 (NS), and L156. The active site involves D159. 234–236 (TEE) is an S-adenosyl-L-methionine binding site.

The protein belongs to the class I-like SAM-binding methyltransferase superfamily. TrmB family.

It is found in the nucleus. The catalysed reaction is guanosine(46) in tRNA + S-adenosyl-L-methionine = N(7)-methylguanosine(46) in tRNA + S-adenosyl-L-homocysteine. It functions in the pathway tRNA modification; N(7)-methylguanine-tRNA biosynthesis. Functionally, catalyzes the formation of N(7)-methylguanine at position 46 (m7G46) in tRNA. The polypeptide is tRNA (guanine-N(7)-)-methyltransferase (Oryza sativa subsp. indica (Rice)).